The primary structure comprises 398 residues: Cyclin-dependent kinase D-1 (398 aa).

Residues 11–291 (YLKREVLGQG…IQQALKHRYF (281 aa)) enclose the Protein kinase domain. Residues 17–25 (LGQGTYGVV) and Lys-40 each bind ATP. Tyr-22 carries the post-translational modification Phosphotyrosine. The Proton acceptor role is filled by Asp-133. Ser-160 bears the Phosphoserine mark. Position 166 is a phosphothreonine (Thr-166). The segment at 296–318 (SPTDPLKLPRPVSKQDAKSSDSK) is disordered. Over residues 308–318 (SKQDAKSSDSK) the composition is skewed to basic and acidic residues.

Belongs to the protein kinase superfamily. CMGC Ser/Thr protein kinase family. CDC2/CDKX subfamily. Post-translationally, autophosphorylated. Expressed at low levels in suspension cell culture, but not in plant organs.

It localises to the nucleus. The catalysed reaction is L-seryl-[protein] + ATP = O-phospho-L-seryl-[protein] + ADP + H(+). It catalyses the reaction L-threonyl-[protein] + ATP = O-phospho-L-threonyl-[protein] + ADP + H(+). The enzyme catalyses [DNA-directed RNA polymerase] + ATP = phospho-[DNA-directed RNA polymerase] + ADP + H(+). The chain is Cyclin-dependent kinase D-1 (CDKD-1) from Arabidopsis thaliana (Mouse-ear cress).